Here is a 463-residue protein sequence, read N- to C-terminus: NADH-quinone oxidoreductase subunit N (463 aa).

The next 14 membrane-spanning stretches (helical) occupy residues 2–22 (NTLI…ILNF), 25–45 (GIVP…FYEF), 61–81 (FSTA…ALSH), 91–110 (ISDF…AMVS), 114–133 (LAMF…VLAA), 149–169 (FLMG…IYGA), 189–209 (IWFP…IAAV), 223–243 (PALT…ATLF), 264–284 (FTNV…IMAL), 292–312 (MLAF…LTIA), 317–337 (VLLY…SVIL), 362–382 (AAIL…SGFF), 395–415 (GYVA…GYYF), and 434–454 (PFLI…LGLF).

This sequence belongs to the complex I subunit 2 family. In terms of assembly, NDH-1 is composed of 14 different subunits. Subunits NuoA, H, J, K, L, M, N constitute the membrane sector of the complex.

The protein resides in the cell inner membrane. The catalysed reaction is a quinone + NADH + 5 H(+)(in) = a quinol + NAD(+) + 4 H(+)(out). In terms of biological role, NDH-1 shuttles electrons from NADH, via FMN and iron-sulfur (Fe-S) centers, to quinones in the respiratory chain. The immediate electron acceptor for the enzyme in this species is believed to be a menaquinone. Couples the redox reaction to proton translocation (for every two electrons transferred, four hydrogen ions are translocated across the cytoplasmic membrane), and thus conserves the redox energy in a proton gradient. This is NADH-quinone oxidoreductase subunit N from Flavobacterium johnsoniae (strain ATCC 17061 / DSM 2064 / JCM 8514 / BCRC 14874 / CCUG 350202 / NBRC 14942 / NCIMB 11054 / UW101) (Cytophaga johnsonae).